The primary structure comprises 695 residues: F-box only protein 34 (695 aa).

3 disordered regions span residues 239 to 275, 316 to 373, and 472 to 524; these read GQSR…QGEP, LTNG…CPSL, and GQDQ…PGGS. Residues 556-608 form the F-box domain; sequence QQYMACLPHHIIVKIFRLLPTLSLAILKCTCRYFKSIIEYYNIRPADSRWVRD.

In terms of assembly, directly interacts with SKP1 and CUL1.

Substrate-recognition component of the SCF (SKP1-CUL1-F-box protein)-type E3 ubiquitin ligase complex. This Mus musculus (Mouse) protein is F-box only protein 34 (Fbxo34).